Reading from the N-terminus, the 152-residue chain is Siroheme decarboxylase NirD subunit (152 aa).

Belongs to the Ahb/Nir family. Probably forms a complex composed of NirD, NirL, NirG and NirH. All proteins are required for the total conversion of siroheme to didecarboxysiroheme.

It catalyses the reaction siroheme + 2 H(+) = 12,18-didecarboxysiroheme + 2 CO2. It functions in the pathway porphyrin-containing compound metabolism. Involved in heme d1 biosynthesis. Catalyzes the decarboxylation of siroheme into didecarboxysiroheme. This is Siroheme decarboxylase NirD subunit from Stutzerimonas stutzeri (Pseudomonas stutzeri).